Here is a 207-residue protein sequence, read N- to C-terminus: Nitrile hydratase subunit alpha (207 aa).

Fe(3+)-binding residues include Cys110, Cys113, Ser114, and Cys115. Cys113 bears the Cysteine sulfinic acid (-SO2H) mark. Cysteine sulfenic acid (-SOH) is present on Cys115.

This sequence belongs to the nitrile hydratase subunit alpha family. As to quaternary structure, heterodimer of an alpha and a beta chain. Requires Fe(3+) as cofactor. Post-translationally, oxidation on Cys-113 is essential for the activity. In terms of processing, oxidation on Cys-115 stabilizes the Fe-NO ligand coordinated in the inactive form.

The catalysed reaction is an aliphatic primary amide = an aliphatic nitrile + H2O. With respect to regulation, inactivated by nitrosylation of the iron center in the dark and activated by photo-induced nitric oxide (NO) release. Inactivated by oxidation of Cys-115 to a sulfenic acid. Its function is as follows. NHase catalyzes the hydration of various nitrile compounds to the corresponding amides. Industrial production of acrylamide is now being developed using some of the enzymes of this class. The sequence is that of Nitrile hydratase subunit alpha (nthA) from Rhodococcus erythropolis (Arthrobacter picolinophilus).